The following is a 236-amino-acid chain: Rho-related GTP-binding protein RhoV (236 aa).

Residues 1 to 27 (MPPRELSEAESSPLRSPTPPPGRGSAS) are disordered. At S25 the chain carries Phosphoserine. GTP contacts are provided by residues 38–45 (GDGAVGKS), 85–89 (DTAGQ), and 143–146 (TQAD). A lipid anchor (S-palmitoyl cysteine) is attached at C234.

This sequence belongs to the small GTPase superfamily. Rho family. As to quaternary structure, interacts with PAK2. It depends on Mg(2+) as a cofactor.

Its subcellular location is the cell membrane. The protein localises to the endosome membrane. Plays a role in the control of the actin cytoskeleton via activation of the JNK pathway. The chain is Rho-related GTP-binding protein RhoV from Bos taurus (Bovine).